Here is a 489-residue protein sequence, read N- to C-terminus: Glutamyl-tRNA(Gln) amidotransferase subunit A (489 aa).

Active-site charge relay system residues include Lys-79 and Ser-158. Ser-182 (acyl-ester intermediate) is an active-site residue.

Belongs to the amidase family. GatA subfamily. Heterotrimer of A, B and C subunits.

It carries out the reaction L-glutamyl-tRNA(Gln) + L-glutamine + ATP + H2O = L-glutaminyl-tRNA(Gln) + L-glutamate + ADP + phosphate + H(+). Its function is as follows. Allows the formation of correctly charged Gln-tRNA(Gln) through the transamidation of misacylated Glu-tRNA(Gln) in organisms which lack glutaminyl-tRNA synthetase. The reaction takes place in the presence of glutamine and ATP through an activated gamma-phospho-Glu-tRNA(Gln). This Anaplasma marginale (strain Florida) protein is Glutamyl-tRNA(Gln) amidotransferase subunit A.